The chain runs to 525 residues: Probable histidine ammonia-lyase (525 aa).

Residues 145–147 (ASG) constitute a cross-link (5-imidazolinone (Ala-Gly)). Ser146 is modified (2,3-didehydroalanine (Ser)).

Belongs to the PAL/histidase family. Contains an active site 4-methylidene-imidazol-5-one (MIO), which is formed autocatalytically by cyclization and dehydration of residues Ala-Ser-Gly.

The protein localises to the cytoplasm. It carries out the reaction L-histidine = trans-urocanate + NH4(+). The protein operates within amino-acid degradation; L-histidine degradation into L-glutamate; N-formimidoyl-L-glutamate from L-histidine: step 1/3. This chain is Probable histidine ammonia-lyase, found in Halobacterium salinarum (strain ATCC 29341 / DSM 671 / R1).